The sequence spans 122 residues: Acidic phospholipase A2 CTs-A3 (122 aa).

7 disulfides stabilise this stretch: Cys-26-Cys-116, Cys-28-Cys-44, Cys-43-Cys-95, Cys-49-Cys-122, Cys-50-Cys-88, Cys-57-Cys-81, and Cys-75-Cys-86. The Ca(2+) site is built by Tyr-27, Gly-29, and Gly-31. The active site involves His-47. Residue Asp-48 participates in Ca(2+) binding. The active site involves Asp-89.

It depends on Ca(2+) as a cofactor. In terms of tissue distribution, expressed by the venom gland.

It is found in the secreted. It carries out the reaction a 1,2-diacyl-sn-glycero-3-phosphocholine + H2O = a 1-acyl-sn-glycero-3-phosphocholine + a fatty acid + H(+). In terms of biological role, snake venom phospholipase A2 (PLA2) that shows a moderate inhibition of ADP-induced human platelet aggregation when tested on platelet rich plasma. Exhibits moderate hydrolytic activities and prefers the anionic micelles (dPPC with deoxycholate) to the zwitterionic micelles (dPPC with Triton X-100). PLA2 catalyzes the calcium-dependent hydrolysis of the 2-acyl groups in 3-sn-phosphoglycerides. This is Acidic phospholipase A2 CTs-A3 from Trimeresurus stejnegeri (Chinese green tree viper).